Here is a 147-residue protein sequence, read N- to C-terminus: Large ribosomal subunit protein bL9 (147 aa).

It belongs to the bacterial ribosomal protein bL9 family.

Binds to the 23S rRNA. This Clostridium botulinum (strain 657 / Type Ba4) protein is Large ribosomal subunit protein bL9.